A 364-amino-acid chain; its full sequence is FMNH(2)-dependent dimethylsulfone monooxygenase (364 aa).

It belongs to the SsuD family.

It carries out the reaction dimethyl sulfone + FMNH2 + O2 = methanesulfinate + FMN + formaldehyde + H2O + 2 H(+). Functionally, involved in the dimethyl sulfide degradation pathway. Catalyzes the oxidation of dimethylsulfone (DMSO2) to yield methanesulfinate, which is oxidized spontaneously to methanesulfonate in the presence of dioxygen and FMNH(2). In Pseudomonas fluorescens (strain Pf0-1), this protein is FMNH(2)-dependent dimethylsulfone monooxygenase.